The primary structure comprises 705 residues: Ribonuclease R (705 aa).

One can recognise an RNB domain in the interval 240-567 (RRDLREQLCF…VHRLLKKALR (328 aa)). Residues 615–696 (GEEFIGIITG…ERARVEFELI (82 aa)) enclose the S1 motif domain.

This sequence belongs to the RNR ribonuclease family. RNase R subfamily.

The protein localises to the cytoplasm. It carries out the reaction Exonucleolytic cleavage in the 3'- to 5'-direction to yield nucleoside 5'-phosphates.. In terms of biological role, 3'-5' exoribonuclease that releases 5'-nucleoside monophosphates and is involved in maturation of structured RNAs. This Aquifex aeolicus (strain VF5) protein is Ribonuclease R.